The primary structure comprises 103 residues: Small ribosomal subunit protein uS10 (103 aa).

Belongs to the universal ribosomal protein uS10 family. As to quaternary structure, part of the 30S ribosomal subunit.

In terms of biological role, involved in the binding of tRNA to the ribosomes. This Alcanivorax borkumensis (strain ATCC 700651 / DSM 11573 / NCIMB 13689 / SK2) protein is Small ribosomal subunit protein uS10.